The sequence spans 393 residues: Phosphoglycerate kinase (393 aa).

Substrate contacts are provided by residues 21–23, R36, 59–62, R113, and R146; these read DLN and HLGR. ATP-binding positions include K197, E319, and 345-348; that span reads GGDT.

This sequence belongs to the phosphoglycerate kinase family. In terms of assembly, monomer.

The protein localises to the cytoplasm. The catalysed reaction is (2R)-3-phosphoglycerate + ATP = (2R)-3-phospho-glyceroyl phosphate + ADP. Its pathway is carbohydrate degradation; glycolysis; pyruvate from D-glyceraldehyde 3-phosphate: step 2/5. The sequence is that of Phosphoglycerate kinase from Nitratidesulfovibrio vulgaris (strain DP4) (Desulfovibrio vulgaris).